The sequence spans 196 residues: Nucleoid occlusion factor SlmA (196 aa).

The HTH tetR-type domain maps to 7–68; the sequence is PNRRDEILQA…GLIEFIEESI (62 aa). Positions 31 to 50 form a DNA-binding region, H-T-H motif; sequence TTAKLAKQVGVSEAALYRHF. Residues 71-93 adopt a coiled-coil conformation; that stretch reads RVNRILEDEKDTLKRIELLLKLL.

This sequence belongs to the nucleoid occlusion factor SlmA family. Homodimer. Interacts with FtsZ.

Its subcellular location is the cytoplasm. It localises to the nucleoid. Required for nucleoid occlusion (NO) phenomenon, which prevents Z-ring formation and cell division over the nucleoid. Acts as a DNA-associated cell division inhibitor that binds simultaneously chromosomal DNA and FtsZ, and disrupts the assembly of FtsZ polymers. SlmA-DNA-binding sequences (SBS) are dispersed on non-Ter regions of the chromosome, preventing FtsZ polymerization at these regions. The sequence is that of Nucleoid occlusion factor SlmA from Aliivibrio fischeri (strain MJ11) (Vibrio fischeri).